Here is a 359-residue protein sequence, read N- to C-terminus: Ribosomal RNA small subunit methyltransferase H (359 aa).

Residues 39-41, Asp58, Phe87, Asp108, and Gln115 contribute to the S-adenosyl-L-methionine site; that span reads AGH. A disordered region spans residues 339–359; it reads IQGSASPGRAKNTARIRTRRG. Basic residues predominate over residues 350–359; it reads NTARIRTRRG.

It belongs to the methyltransferase superfamily. RsmH family.

The protein resides in the cytoplasm. It catalyses the reaction cytidine(1402) in 16S rRNA + S-adenosyl-L-methionine = N(4)-methylcytidine(1402) in 16S rRNA + S-adenosyl-L-homocysteine + H(+). Specifically methylates the N4 position of cytidine in position 1402 (C1402) of 16S rRNA. In Bifidobacterium longum subsp. infantis (strain ATCC 15697 / DSM 20088 / JCM 1222 / NCTC 11817 / S12), this protein is Ribosomal RNA small subunit methyltransferase H.